A 39-amino-acid chain; its full sequence is Photosystem II reaction center protein L (39 aa).

A helical membrane pass occupies residues 18-38 (SLYLGLLLVAVLGILFSSYFF).

Belongs to the PsbL family. As to quaternary structure, PSII is composed of 1 copy each of membrane proteins PsbA, PsbB, PsbC, PsbD, PsbE, PsbF, PsbH, PsbI, PsbJ, PsbK, PsbL, PsbM, PsbT, PsbX, PsbY, PsbZ, Psb30/Ycf12, peripheral proteins PsbO, CyanoQ (PsbQ), PsbU, PsbV and a large number of cofactors. It forms dimeric complexes.

Its subcellular location is the cellular thylakoid membrane. Its function is as follows. One of the components of the core complex of photosystem II (PSII). PSII is a light-driven water:plastoquinone oxidoreductase that uses light energy to abstract electrons from H(2)O, generating O(2) and a proton gradient subsequently used for ATP formation. It consists of a core antenna complex that captures photons, and an electron transfer chain that converts photonic excitation into a charge separation. This subunit is found at the monomer-monomer interface and is required for correct PSII assembly and/or dimerization. The polypeptide is Photosystem II reaction center protein L (Rippkaea orientalis (strain PCC 8801 / RF-1) (Cyanothece sp. (strain PCC 8801))).